The primary structure comprises 210 residues: Thymidylate kinase (210 aa).

10–17 (GPDGAGKT) contributes to the ATP binding site.

The protein belongs to the thymidylate kinase family.

The enzyme catalyses dTMP + ATP = dTDP + ADP. Functionally, phosphorylation of dTMP to form dTDP in both de novo and salvage pathways of dTTP synthesis. In Geobacillus sp. (strain WCH70), this protein is Thymidylate kinase.